Here is a 435-residue protein sequence, read N- to C-terminus: GTPase Der (435 aa).

EngA-type G domains are found at residues 4–167 (PVVA…PEKD) and 175–350 (IRFS…DNHN). GTP is bound by residues 10–17 (GRPNVGKS), 57–61 (DTGGI), 119–122 (NKAD), 181–188 (GRPNVGKS), 228–232 (DTAGI), and 293–296 (NKWD). Positions 351 to 435 (KRVQSATLND…PIHLIERARK (85 aa)) constitute a KH-like domain.

The protein belongs to the TRAFAC class TrmE-Era-EngA-EngB-Septin-like GTPase superfamily. EngA (Der) GTPase family. Associates with the 50S ribosomal subunit.

GTPase that plays an essential role in the late steps of ribosome biogenesis. This Levilactobacillus brevis (strain ATCC 367 / BCRC 12310 / CIP 105137 / JCM 1170 / LMG 11437 / NCIMB 947 / NCTC 947) (Lactobacillus brevis) protein is GTPase Der.